The primary structure comprises 388 residues: 3-oxo-tetronate kinase (388 aa).

ATP is bound by residues Ser258 and 360 to 363 (GGET).

It belongs to the four-carbon acid sugar kinase family.

The enzyme catalyses 3-dehydro-L-erythronate + ATP = 3-dehydro-4-O-phospho-L-erythronate + ADP + H(+). It carries out the reaction 3-dehydro-D-erythronate + ATP = 3-dehydro-4-O-phospho-D-erythronate + ADP + H(+). Functionally, catalyzes the ATP-dependent phosphorylation of 3-oxo-tetronate to 3-oxo-tetronate 4-phosphate. The protein is 3-oxo-tetronate kinase of Escherichia coli (strain K12).